Reading from the N-terminus, the 478-residue chain is Lysine histidine transporter-like 7 (478 aa).

The Cytoplasmic segment spans residues 1–63 (MSIALGNLFD…ITESRKGNVY (63 aa)). The tract at residues 15-45 (ESGGSPLFMSPAPSTDPQPISGEKNGGDGGR) is disordered. The chain crosses the membrane as a helical span at residues 64–86 (TATFHLLCSGIGLQVILLPAAFA). At 87–89 (ALG) the chain is on the extracellular side. The chain crosses the membrane as a helical span at residues 90 to 112 (WVWGTIILTVGFVWKLYTTWLLV). At 113–140 (QLHEAVPGIRISRYVRLAIASFGVKLGK) the chain is on the cytoplasmic side. Residues 141 to 161 (LLGIFPVMYLSGGACTILVIT) traverse the membrane as a helical segment. Topologically, residues 162 to 177 (GGKSIQQLLQIMSDDN) are extracellular. A helical membrane pass occupies residues 178-198 (TAPLTSVQCFLVFSCIAMIMS). The Cytoplasmic segment spans residues 199-205 (QFPNLNS). The helical transmembrane segment at 206–226 (LFGVSLIGAFMGIAYCTVIWI) threads the bilayer. Over 227–241 (LPVASDSQRTQVSVS) the chain is Extracellular. A helical membrane pass occupies residues 242–262 (YATMDKSFVHIFNAIGLIALV). At 263–291 (YRGNNLVLEIQGTLPSDSKNPSCKTMWRA) the chain is on the cytoplasmic side. A helical transmembrane segment spans residues 292-312 (VMISHALVAICMFPLTFAVYW). At 313-340 (AYGDKIPATGGPVGNYLKLYTQEHSKRA) the chain is on the extracellular side. Residues 341–361 (ACFIHLTFIFSCLCSYPINLM) traverse the membrane as a helical segment. The Cytoplasmic portion of the chain corresponds to 362 to 379 (PACDNIEMVYITKKKKPA). Residues 380-402 (SIIVRMMLRVFLSLVCFTIAVGF) form a helical membrane-spanning segment. Residues 403-406 (PFLP) are Extracellular-facing. A helical membrane pass occupies residues 407-429 (YLAVLIGAIALLVTFTYPCFMWI). Over 430–439 (SIKKPQRKSP) the chain is Cytoplasmic. A helical membrane pass occupies residues 440-460 (MWLFNVLVGCLGASLSVLLLV). The Extracellular portion of the chain corresponds to 461 to 478 (ASAMRLAQKGLHANFFRP).

The protein belongs to the amino acid/polyamine transporter 2 family. Amino acid/auxin permease (AAAP) (TC 2.A.18.2) subfamily.

It localises to the cell membrane. In terms of biological role, amino acid transporter. The chain is Lysine histidine transporter-like 7 from Arabidopsis thaliana (Mouse-ear cress).